The following is a 273-amino-acid chain: Cytochrome b-c1 complex subunit Rieske, mitochondrial (273 aa).

Residues 1–61 (MLRVAGRRLS…PFFVASRGFS (61 aa)) constitute a mitochondrion transit peptide. A disordered region spans residues 25 to 46 (PLAGAGVPDRDDDSARGRSQPR). The Mitochondrial matrix segment spans residues 62 to 110 (STETVVPRNQDAGLADLPATVAAVKNPNPKVVYDEYNHERYPPGDPSKR). Residues 111-133 (AFAYFVLSGGRFIYASLLRLLVL) form a helical membrane-spanning segment. Topologically, residues 134–273 (KFVLSMSASK…FLEENKLLVG (140 aa)) are mitochondrial intermembrane. Positions 176 to 271 (RRRTEDDIKL…YSFLEENKLL (96 aa)) constitute a Rieske domain. [2Fe-2S] cluster contacts are provided by Cys-216, His-218, Cys-235, and His-238. Cys-221 and Cys-237 form a disulfide bridge.

Belongs to the Rieske iron-sulfur protein family. As to quaternary structure, component of the ubiquinol-cytochrome c oxidoreductase (cytochrome b-c1 complex, complex III, CIII), a multisubunit enzyme composed of 3 respiratory subunits cytochrome b, cytochrome c1 and Rieske protein, 2 core protein subunits, and several low-molecular weight protein subunits. The complex exists as an obligatory dimer and forms supercomplexes (SCs) in the inner mitochondrial membrane with cytochrome c oxidase (complex IV, CIV). [2Fe-2S] cluster serves as cofactor.

The protein localises to the mitochondrion inner membrane. The catalysed reaction is a quinol + 2 Fe(III)-[cytochrome c](out) = a quinone + 2 Fe(II)-[cytochrome c](out) + 2 H(+)(out). In terms of biological role, component of the ubiquinol-cytochrome c oxidoreductase, a multisubunit transmembrane complex that is part of the mitochondrial electron transport chain which drives oxidative phosphorylation. The respiratory chain contains 3 multisubunit complexes succinate dehydrogenase (complex II, CII), ubiquinol-cytochrome c oxidoreductase (cytochrome b-c1 complex, complex III, CIII) and cytochrome c oxidase (complex IV, CIV), that cooperate to transfer electrons derived from NADH and succinate to molecular oxygen, creating an electrochemical gradient over the inner membrane that drives transmembrane transport and the ATP synthase. The cytochrome b-c1 complex catalyzes electron transfer from ubiquinol to cytochrome c, linking this redox reaction to translocation of protons across the mitochondrial inner membrane, with protons being carried across the membrane as hydrogens on the quinol. In the process called Q cycle, 2 protons are consumed from the matrix, 4 protons are released into the intermembrane space and 2 electrons are passed to cytochrome c. The Rieske protein is a catalytic core subunit containing a [2Fe-2S] iron-sulfur cluster. It cycles between 2 conformational states during catalysis to transfer electrons from the quinol bound in the Q(0) site in cytochrome b to cytochrome c1. In Zea mays (Maize), this protein is Cytochrome b-c1 complex subunit Rieske, mitochondrial.